The chain runs to 142 residues: MAAMTVQLDIVSAESSIFSGLVAHLQVTGSEGDLGVMPGHAPLLTHIKPGMARIVKQDGKEEVFYLSGGILEVQPSSVSVLADVVMRADDIDEQAAAEAKRRAETAMADAGADFNYAAAAVELAQAVAQLRVVETIKKNIAR.

It belongs to the ATPase epsilon chain family. In terms of assembly, F-type ATPases have 2 components, CF(1) - the catalytic core - and CF(0) - the membrane proton channel. CF(1) has five subunits: alpha(3), beta(3), gamma(1), delta(1), epsilon(1). CF(0) has three main subunits: a, b and c.

Its subcellular location is the cell inner membrane. Produces ATP from ADP in the presence of a proton gradient across the membrane. The polypeptide is ATP synthase epsilon chain (Shewanella piezotolerans (strain WP3 / JCM 13877)).